The sequence spans 407 residues: Probable acyl-CoA dehydrogenase FadE2 (407 aa).

This sequence belongs to the acyl-CoA dehydrogenase family. It depends on FAD as a cofactor.

The enzyme catalyses a 2,3-saturated acyl-CoA + A = a 2,3-dehydroacyl-CoA + AH2. In Mycobacterium tuberculosis (strain ATCC 25618 / H37Rv), this protein is Probable acyl-CoA dehydrogenase FadE2.